Consider the following 304-residue polypeptide: UDP-N-acetylenolpyruvoylglucosamine reductase (304 aa).

The region spanning 33–198 (IGGPADLLVM…LEVVLALQEG (166 aa)) is the FAD-binding PCMH-type domain. Arg177 is a catalytic residue. Ser227 functions as the Proton donor in the catalytic mechanism. The active site involves Glu297.

It belongs to the MurB family. FAD is required as a cofactor.

The protein localises to the cytoplasm. It carries out the reaction UDP-N-acetyl-alpha-D-muramate + NADP(+) = UDP-N-acetyl-3-O-(1-carboxyvinyl)-alpha-D-glucosamine + NADPH + H(+). It participates in cell wall biogenesis; peptidoglycan biosynthesis. Its function is as follows. Cell wall formation. The protein is UDP-N-acetylenolpyruvoylglucosamine reductase of Alkaliphilus metalliredigens (strain QYMF).